The chain runs to 146 residues: Large ribosomal subunit protein uL15 (146 aa).

The disordered stretch occupies residues 1–53; the sequence is MILSNLKPVPGARHSKKRLGRGPGSGTGKTSGKGHKGQKARSGGGVRPGFEGG. Gly residues-rich tracts occupy residues 21-31 and 42-52; these read RGPGSGTGKTS and SGGGVRPGFEG.

The protein belongs to the universal ribosomal protein uL15 family. As to quaternary structure, part of the 50S ribosomal subunit.

Binds to the 23S rRNA. The sequence is that of Large ribosomal subunit protein uL15 from Acholeplasma laidlawii (strain PG-8A).